The sequence spans 783 residues: Cation/H(+) antiporter 11 (783 aa).

Helical transmembrane passes span 31 to 51 (VVFG…FFCI), 61 to 81 (IGVS…PQLF), 101 to 120 (AALR…LMTV), 135 to 155 (VVIG…LNLF), 175 to 195 (VIVI…LLEL), 205 to 225 (LALS…IVAT), 244 to 264 (AVII…QWII), 276 to 295 (IYIH…FVFF), 300 to 322 (VLGP…ALEA), 360 to 380 (IFLT…LCLY), 389 to 409 (LAVS…YEAV), and 418 to 438 (ATYA…PMVV).

This sequence belongs to the monovalent cation:proton antiporter 2 (CPA2) transporter (TC 2.A.37) family. CHX (TC 2.A.37.4) subfamily. Specifically expressed in pollen.

It is found in the membrane. Functionally, may operate as a cation/H(+) antiporter. The sequence is that of Cation/H(+) antiporter 11 (CHX11) from Arabidopsis thaliana (Mouse-ear cress).